A 201-amino-acid polypeptide reads, in one-letter code: Probable molybdenum cofactor guanylyltransferase (201 aa).

GTP contacts are provided by residues 6-8 (LAG), Lys-18, Asp-65, and Asp-97. Asp-97 is a Mg(2+) binding site.

The protein belongs to the MobA family. Mg(2+) is required as a cofactor.

Its subcellular location is the cytoplasm. The catalysed reaction is Mo-molybdopterin + GTP + H(+) = Mo-molybdopterin guanine dinucleotide + diphosphate. Transfers a GMP moiety from GTP to Mo-molybdopterin (Mo-MPT) cofactor (Moco or molybdenum cofactor) to form Mo-molybdopterin guanine dinucleotide (Mo-MGD) cofactor. The chain is Probable molybdenum cofactor guanylyltransferase from Staphylococcus haemolyticus (strain JCSC1435).